The primary structure comprises 290 residues: Nucleoid occlusion protein (290 aa).

Residues 153–172 (EALAQRLGKGQSTIANKLRL) constitute a DNA-binding region (H-T-H motif).

This sequence belongs to the ParB family.

Its subcellular location is the cytoplasm. The protein resides in the nucleoid. Effects nucleoid occlusion by binding relatively nonspecifically to DNA and preventing the assembly of the division machinery in the vicinity of the nucleoid, especially under conditions that disturb the cell cycle. It helps to coordinate cell division and chromosome segregation by preventing the formation of the Z ring through the nucleoid, which would cause chromosome breakage. In Bacillus cereus (strain ATCC 10987 / NRS 248), this protein is Nucleoid occlusion protein.